A 336-amino-acid polypeptide reads, in one-letter code: UPF0104 membrane protein MJ1595 (336 aa).

A run of 9 helical transmembrane segments spans residues 9-29 (STIL…YIGL), 40-60 (NPEY…ILSA), 68-88 (ILGY…GLFI), 127-147 (VLDT…FVVT), 154-174 (YLIL…YLIA), 223-243 (WEVV…ILKL), 245-265 (LLFL…VYLI), 285-305 (VMIL…AVTL), and 306-326 (LDRL…MLII).

This sequence belongs to the UPF0104 family.

The protein resides in the cell membrane. This Methanocaldococcus jannaschii (strain ATCC 43067 / DSM 2661 / JAL-1 / JCM 10045 / NBRC 100440) (Methanococcus jannaschii) protein is UPF0104 membrane protein MJ1595.